A 243-amino-acid chain; its full sequence is Small ribosomal subunit protein uS5 (243 aa).

Positions 1 to 54 (MSDNEKETQVAEETQNTQATAESSNNDERRGRRNNRGGEGRRGDRRGRREDNHE) are disordered. Polar residues predominate over residues 11–24 (AEETQNTQATAESS). A compositionally biased stretch (basic and acidic residues) spans 26–54 (NDERRGRRNNRGGEGRRGDRRGRREDNHE). Residues 57-120 (MLDRVVTINR…LDAKKHLFNV (64 aa)) form the S5 DRBM domain.

This sequence belongs to the universal ribosomal protein uS5 family. As to quaternary structure, part of the 30S ribosomal subunit. Contacts proteins S4 and S8.

In terms of biological role, with S4 and S12 plays an important role in translational accuracy. Located at the back of the 30S subunit body where it stabilizes the conformation of the head with respect to the body. The protein is Small ribosomal subunit protein uS5 of Bifidobacterium animalis subsp. lactis (strain AD011).